A 329-amino-acid chain; its full sequence is Fructose-1,6-bisphosphatase class 1 (329 aa).

Residues glutamate 84, aspartate 103, leucine 105, and aspartate 106 each coordinate Mg(2+). Residues 106–109 (DGSS), asparagine 196, and lysine 262 contribute to the substrate site. Glutamate 268 contacts Mg(2+).

It belongs to the FBPase class 1 family. As to quaternary structure, homotetramer. Requires Mg(2+) as cofactor.

Its subcellular location is the cytoplasm. The enzyme catalyses beta-D-fructose 1,6-bisphosphate + H2O = beta-D-fructose 6-phosphate + phosphate. Its pathway is carbohydrate biosynthesis; gluconeogenesis. In Shewanella halifaxensis (strain HAW-EB4), this protein is Fructose-1,6-bisphosphatase class 1.